A 300-amino-acid chain; its full sequence is ATP-dependent (S)-NAD(P)H-hydrate dehydratase (300 aa).

A YjeF C-terminal domain is found at 7–289; it reads IEARLKSIIP…ESIPSVFDQV (283 aa). (6S)-NADPHX is bound by residues Gly-107 and 160-166; that span reads NVMEYRR. ATP is bound by residues 194–198 and 213–222; these read KGQVD and GSPRRCGGQG. Asp-223 contacts (6S)-NADPHX.

The protein belongs to the NnrD/CARKD family. Requires Mg(2+) as cofactor.

The enzyme catalyses (6S)-NADHX + ATP = ADP + phosphate + NADH + H(+). The catalysed reaction is (6S)-NADPHX + ATP = ADP + phosphate + NADPH + H(+). Catalyzes the dehydration of the S-form of NAD(P)HX at the expense of ATP, which is converted to ADP. Together with NAD(P)HX epimerase, which catalyzes the epimerization of the S- and R-forms, the enzyme allows the repair of both epimers of NAD(P)HX, a damaged form of NAD(P)H that is a result of enzymatic or heat-dependent hydration. This is ATP-dependent (S)-NAD(P)H-hydrate dehydratase from Entamoeba histolytica (strain ATCC 30459 / HM-1:IMSS / ABRM).